A 195-amino-acid chain; its full sequence is Obelin (195 aa).

Residues 1–6 (MSSKYA) constitute a propeptide that is removed on maturation. 4 consecutive EF-hand domains span residues 17 to 52 (RWIK…DICA), 53 to 88 (KLEA…FPQF), 110 to 145 (LIRE…SGIS), and 146 to 181 (PSQE…FWYT). Positions 30, 32, 34, 36, and 41 each coordinate Ca(2+). Ca(2+) is bound by residues aspartate 123, aspartate 125, serine 127, threonine 129, glutamate 134, aspartate 159, aspartate 161, serine 163, aspartate 165, and glutamate 170.

It belongs to the aequorin family.

Functionally, ca(2+)-dependent bioluminescence photoprotein. Displays an emission peak at 470 nm (blue light). Trace amounts of calcium ion trigger the intramolecular oxidation of the chromophore, coelenterazine into coelenteramide and CO(2) with the concomitant emission of light. This is Obelin from Obelia longissima (Black sea hydrozoan).